We begin with the raw amino-acid sequence, 115 residues long: Nitrogen regulatory protein P-II 2 (115 aa).

The residue at position 54 (Tyr54) is an O-UMP-tyrosine.

Belongs to the P(II) protein family.

In terms of biological role, could be involved in the regulation of nitrogen fixation. The protein is Nitrogen regulatory protein P-II 2 of Methanothermobacter thermautotrophicus (strain ATCC 29096 / DSM 1053 / JCM 10044 / NBRC 100330 / Delta H) (Methanobacterium thermoautotrophicum).